Here is a 117-residue protein sequence, read N- to C-terminus: Large ribosomal subunit protein bL19 (117 aa).

The protein belongs to the bacterial ribosomal protein bL19 family.

This protein is located at the 30S-50S ribosomal subunit interface and may play a role in the structure and function of the aminoacyl-tRNA binding site. The sequence is that of Large ribosomal subunit protein bL19 from Halorhodospira halophila (strain DSM 244 / SL1) (Ectothiorhodospira halophila (strain DSM 244 / SL1)).